The following is a 527-amino-acid chain: Inorganic phosphate transporter 1-1 (527 aa).

At 1 to 21 the chain is on the cytoplasmic side; the sequence is MAGGQLNVLSTLDQAKTQWYH. The helical transmembrane segment at 22-42 threads the bilayer; sequence FMAIVIAGMGFFTDAYDLFCI. Topologically, residues 43–70 are extracellular; the sequence is SLVTKLLGRIYYTDDSKDTPGALPPNVS. Residues 71–91 traverse the membrane as a helical segment; it reads AAVTGVALCGTLAGQLFFGWL. Over 92 to 99 the chain is Cytoplasmic; sequence GDKLGRKS. Residues 100–120 form a helical membrane-spanning segment; the sequence is VYGFTLILMVVCSVASGLSFG. The Extracellular segment spans residues 121–124; sequence SSAK. The helical transmembrane segment at 125 to 145 threads the bilayer; the sequence is GVVSTLCFFRFWLGFGIGGDY. Residues 146–163 are Cytoplasmic-facing; sequence PLSATIMSEYANKRTRGA. Residues 164 to 184 traverse the membrane as a helical segment; the sequence is FIAAVFAMQGFGILFGAIVAL. Over 185–211 the chain is Extracellular; it reads AVSAGFRHAYPAPSYSDNHAASLVPQA. The helical transmembrane segment at 212–232 threads the bilayer; the sequence is DYVWRIILMFGTVPAALTYYW. Residues 233 to 292 lie on the Cytoplasmic side of the membrane; sequence RMKMPETARYTALIARNAKQAAADMSKVLHTQIEESADRAETVAVGGESWGLFSRQFLRR. Residues 293-313 traverse the membrane as a helical segment; that stretch reads HGLHLLATTSTWFLLDIAFYS. The Extracellular segment spans residues 314–348; sequence QNLFQKDIFSKVGWIPPAKTMNALEELYRIARAQA. Residues 349-369 form a helical membrane-spanning segment; sequence LIALCGTIPGYWFTVAFIEIM. Residues 370 to 371 lie on the Cytoplasmic side of the membrane; it reads GR. A helical transmembrane segment spans residues 372 to 392; the sequence is FWIQIMGFAMMTAFMLGLAIP. Residues 393–405 lie on the Extracellular side of the membrane; sequence YHHWTTPGHHTGF. A helical transmembrane segment spans residues 406-426; it reads IVMYGFTFFFANFGPNSTTFI. Topologically, residues 427-442 are cytoplasmic; the sequence is VPAEIYPARLRSTCHG. Residues 443-463 traverse the membrane as a helical segment; sequence ISAAAGKAGAIIGAFGFLYAA. The Extracellular portion of the chain corresponds to 464-481; the sequence is QDQHKPEPGYPRGIGIKN. A helical membrane pass occupies residues 482 to 502; the sequence is ALFVLAGTNFLGTIMTLLVPE. Over 503–527 the chain is Cytoplasmic; the sequence is SKGMSLEVISQEVADGDDEEAAYPK.

Belongs to the major facilitator superfamily. Phosphate:H(+) symporter (TC 2.A.1.9) family. In terms of tissue distribution, expressed in roots, stems and leaves.

It is found in the membrane. In terms of biological role, high-affinity transporter for external inorganic phosphate. Required for phosphate acquisition in plant. This Oryza sativa subsp. japonica (Rice) protein is Inorganic phosphate transporter 1-1 (PHT1-1).